The chain runs to 257 residues: TLC domain-containing protein 3A (257 aa).

7 consecutive transmembrane segments (helical) span residues 1 to 21 (MLLT…LCTW), 42 to 62 (LVSS…IRSC), 77 to 97 (VWFL…CEWC), 113 to 135 (FLSR…VPVA), 142 to 162 (LGDF…FVSL), 181 to 201 (GILT…FMYW), and 220 to 240 (FYCN…FCLL). The region spanning 33–249 (TDCVMISTRL…LCRKAVRLFD (217 aa)) is the TLC domain.

In terms of assembly, interacts with GGT7 isoform 3 and SLC3A2. As to expression, highly expressed in pancreas. Detected at intermediate levels in heart, placenta and kidney, and at low levels in brain, liver and skeletal muscle. Not detected in normal lung.

Its subcellular location is the cell membrane. The chain is TLC domain-containing protein 3A from Homo sapiens (Human).